Here is a 217-residue protein sequence, read N- to C-terminus: Probable GTP-binding protein EngB (217 aa).

The region spanning 37-214 (SGLEVAFAGR…RAAMARLIGD (178 aa)) is the EngB-type G domain. GTP is bound by residues 45 to 52 (GRSNVGKS), 72 to 76 (GRTQE), 92 to 95 (DMPG), 159 to 162 (TKAD), and 193 to 195 (TSS). Positions 52 and 74 each coordinate Mg(2+).

This sequence belongs to the TRAFAC class TrmE-Era-EngA-EngB-Septin-like GTPase superfamily. EngB GTPase family. Requires Mg(2+) as cofactor.

In terms of biological role, necessary for normal cell division and for the maintenance of normal septation. The polypeptide is Probable GTP-binding protein EngB (Nitrobacter winogradskyi (strain ATCC 25391 / DSM 10237 / CIP 104748 / NCIMB 11846 / Nb-255)).